The chain runs to 457 residues: tRNA modification GTPase MnmE (457 aa).

(6S)-5-formyl-5,6,7,8-tetrahydrofolate-binding residues include Arg-23, Glu-86, and Arg-125. The 157-residue stretch at 221–377 (GVSVLIAGKP…LREAVFETFI (157 aa)) folds into the TrmE-type G domain. A K(+)-binding site is contributed by Asn-231. Residues 231–236 (NVGKSS), 250–256 (TSVPGTT), and 275–278 (DTAG) contribute to the GTP site. Ser-235 contacts Mg(2+). 3 residues coordinate K(+): Thr-250, Val-252, and Thr-255. A Mg(2+)-binding site is contributed by Thr-256. Position 457 (Lys-457) interacts with (6S)-5-formyl-5,6,7,8-tetrahydrofolate.

This sequence belongs to the TRAFAC class TrmE-Era-EngA-EngB-Septin-like GTPase superfamily. TrmE GTPase family. Homodimer. Heterotetramer of two MnmE and two MnmG subunits. Requires K(+) as cofactor.

It localises to the cytoplasm. In terms of biological role, exhibits a very high intrinsic GTPase hydrolysis rate. Involved in the addition of a carboxymethylaminomethyl (cmnm) group at the wobble position (U34) of certain tRNAs, forming tRNA-cmnm(5)s(2)U34. In Geobacter metallireducens (strain ATCC 53774 / DSM 7210 / GS-15), this protein is tRNA modification GTPase MnmE.